We begin with the raw amino-acid sequence, 204 residues long: Protein-L-isoaspartate O-methyltransferase (204 aa).

It belongs to the methyltransferase superfamily. L-isoaspartyl/D-aspartyl protein methyltransferase family. As to quaternary structure, monomer.

The protein resides in the cytoplasm. It carries out the reaction [protein]-L-isoaspartate + S-adenosyl-L-methionine = [protein]-L-isoaspartate alpha-methyl ester + S-adenosyl-L-homocysteine. Its function is as follows. Catalyzes the methyl esterification of L-isoaspartyl residues in peptides and proteins that result from spontaneous decomposition of normal L-aspartyl and L-asparaginyl residues. It plays a role in the repair and/or degradation of damaged proteins. This Rhizobium meliloti (strain 1021) (Ensifer meliloti) protein is Protein-L-isoaspartate O-methyltransferase (pcm).